The primary structure comprises 454 residues: Growth/differentiation factor 6 (454 aa).

The N-terminal stretch at 1-22 (MDTPRVLLWAIFLISFLWDLPG) is a signal peptide. The propeptide occupies 23 to 334 (FQQASISSSS…LPSPGRRRRR (312 aa)). The disordered stretch occupies residues 28–93 (ISSSSSSSTE…QGQEPPGRGL (66 aa)). 2 stretches are compositionally biased toward basic and acidic residues: residues 39–52 (DSTKDVGNRKEGKM) and 60–73 (AEGRTPPEHGLRQK). Low complexity predominate over residues 81-92 (GQHQGQEPPGRG). An N-linked (GlcNAc...) asparagine glycan is attached at Asn-117. Disordered stretches follow at residues 247-268 (DTGARARGPQQPPPLDLRSLGF) and 303-350 (AEAA…KKSR). The span at 303-319 (AEAAGAEGSWPAPSGSP) shows a compositional bias: low complexity. Positions 329 to 350 (GRRRRRTAFASRHGKRHGKKSR) are enriched in basic residues. 3 cysteine pairs are disulfide-bonded: Cys-353-Cys-419, Cys-382-Cys-451, and Cys-386-Cys-453.

Belongs to the TGF-beta family. Homodimer; disulfide-linked. As to expression, expressed in different subsets of developing joints. Highly expressed in the cochlea.

It localises to the secreted. Its function is as follows. Growth factor that controls proliferation and cellular differentiation in the retina and bone formation. Plays a key role in regulating apoptosis during retinal development. Establishes dorsal-ventral positional information in the retina and controls the formation of the retinotectal map. Required for normal formation of bones and joints in the limbs, skull, digits and axial skeleton. Plays a key role in establishing boundaries between skeletal elements during development. Regulation of GDF6 expression seems to be a mechanism for evolving species-specific changes in skeletal structures. Seems to positively regulate differentiation of chondrogenic tissue through the growth factor receptors subunits BMPR1A, BMPR1B, BMPR2 and ACVR2A, leading to the activation of SMAD1-SMAD5-SMAD8 complex. The regulation of chondrogenic differentiation is inhibited by NOG. Also involved in the induction of adipogenesis from mesenchymal stem cells. This mechanism acts through the growth factor receptors subunits BMPR1A, BMPR2 and ACVR2A and the activation of SMAD1-SMAD5-SMAD8 complex and MAPK14/p38. The polypeptide is Growth/differentiation factor 6 (Gdf6) (Mus musculus (Mouse)).